The chain runs to 421 residues: Serine hydroxymethyltransferase (421 aa).

(6S)-5,6,7,8-tetrahydrofolate is bound by residues Leu118 and 122 to 124; that span reads GHL. Lys226 is modified (N6-(pyridoxal phosphate)lysine).

This sequence belongs to the SHMT family. As to quaternary structure, homodimer. The cofactor is pyridoxal 5'-phosphate.

Its subcellular location is the cytoplasm. The catalysed reaction is (6R)-5,10-methylene-5,6,7,8-tetrahydrofolate + glycine + H2O = (6S)-5,6,7,8-tetrahydrofolate + L-serine. It functions in the pathway one-carbon metabolism; tetrahydrofolate interconversion. It participates in amino-acid biosynthesis; glycine biosynthesis; glycine from L-serine: step 1/1. Its function is as follows. Catalyzes the reversible interconversion of serine and glycine with tetrahydrofolate (THF) serving as the one-carbon carrier. This reaction serves as the major source of one-carbon groups required for the biosynthesis of purines, thymidylate, methionine, and other important biomolecules. Also exhibits THF-independent aldolase activity toward beta-hydroxyamino acids, producing glycine and aldehydes, via a retro-aldol mechanism. The polypeptide is Serine hydroxymethyltransferase (Mycoplasmopsis agalactiae (strain NCTC 10123 / CIP 59.7 / PG2) (Mycoplasma agalactiae)).